The following is a 392-amino-acid chain: Putative RNA-binding protein Luc7-like 2 (392 aa).

Residue Ser18 is modified to Phosphoserine. Residues 102 to 177 adopt a coiled-coil conformation; sequence EVAKKRLAET…EAEEVYRNSM (76 aa). Over residues 235-257 the composition is skewed to basic and acidic residues; sequence KQEKRNQERLKRREEREREEREK. The tract at residues 235 to 392 is disordered; that stretch reads KQEKRNQERL…SSEEREAGEI (158 aa). A compositionally biased stretch (basic residues) spans 258 to 321; the sequence is LRRSRSHSKN…RSRSHQRSRH (64 aa). Lys266 and Lys269 each carry 5-hydroxylysine; by JMJD6. Basic and acidic residues-rich tracts occupy residues 337–364 and 377–392; these read KERF…DRDR and RSED…AGEI.

Belongs to the Luc7 family. In terms of assembly, interacts with SCNM1.

The protein localises to the nucleus speckle. The protein resides in the nucleus. It is found in the nucleoplasm. May bind to RNA via its Arg/Ser-rich domain. This is Putative RNA-binding protein Luc7-like 2 (LUC7L2) from Homo sapiens (Human).